The sequence spans 506 residues: Phenylacetaldehyde synthase (506 aa).

P101, H202, and H317 together coordinate L-phenylalanine. Residue K318 is modified to N6-(pyridoxal phosphate)lysine.

It belongs to the group II decarboxylase family. Homotetramer. It depends on pyridoxal 5'-phosphate as a cofactor. In terms of tissue distribution, highly expressed in corolla limbs and at lower levels in corolla tubes and ovaries.

It catalyses the reaction L-phenylalanine + O2 + H2O + H(+) = 2-phenylacetaldehyde + H2O2 + NH4(+) + CO2. Functionally, bifunctional enzyme that catalyzes the decarboxylation of L-phenylalanine to 2-phenylethylamine, which is then oxidized to form 2-phenylacetaldehyde, a constituent of floral scent. 2-phenylacetaldehyde is a precursor of 2-phenylethanol, another constituent of floral scent. The polypeptide is Phenylacetaldehyde synthase (Petunia hybrida (Petunia)).